The chain runs to 168 residues: uncharacterized protein (168 aa).

The next 2 membrane-spanning stretches (helical) occupy residues 27 to 47 (NWLVILVFYFLAFGSIMRISG) and 147 to 167 (IENGILLCQVLQALIIVQVMF).

The protein resides in the membrane. This is an uncharacterized protein from Saccharomyces cerevisiae (strain ATCC 204508 / S288c) (Baker's yeast).